The following is a 540-amino-acid chain: CWF19-like protein 1 (540 aa).

The segment at 265–326 (ENPYRKSDKD…AKQPRKHPQP (62 aa)) is disordered. The span at 267–277 (PYRKSDKDTPK) shows a compositional bias: basic and acidic residues.

This sequence belongs to the CWF19 family.

The polypeptide is CWF19-like protein 1 (cwf19l1) (Xenopus laevis (African clawed frog)).